Consider the following 1451-residue polypeptide: DNA excision repair protein ERCC-6-like (1451 aa).

A TPR 1 repeat occupies 27–60; that stretch reads YDRYRQKGKEAALNGELPRALELFQLAYQLQPSE. Positions 118-286 constitute a Helicase ATP-binding domain; that stretch reads SLYRDGRKGG…WALFDFACQG (169 aa). 131–138 serves as a coordination point for ATP; the sequence is DDMGLGKT. Positions 237-240 match the DEAH box motif; that stretch reads DEAH. Residues 479–639 form the Helicase C-terminal domain; sequence FVVSLMECLR…PFRYFSKQEL (161 aa). 7 disordered regions span residues 647–669, 778–804, 935–1006, 1035–1054, 1063–1083, 1096–1140, and 1182–1343; these read DTRS…RSDT, NSFD…ETAS, DDTS…ATTD, DEEV…EFQL, LEEP…NYND, RSTP…LTSS, and LLEN…SAEL. Acidic residues predominate over residues 781 to 804; it reads DEPEFEEDEQNLPSAEDAEMETAS. Polar residues-rich tracts occupy residues 944–964 and 992–1002; these read SDFN…SPSL and QVLSSPLSQHE. Residue S961 is modified to Phosphoserine. Positions 1035–1050 are enriched in acidic residues; sequence DEEVHEVEESAAEESP. Residues 1063–1074 are compositionally biased toward basic and acidic residues; it reads LEEPSINHDKQN. Residues 1121 to 1132 are compositionally biased toward acidic residues; the sequence is DTEEEEEEEEES. Polar residues predominate over residues 1213–1230; sequence VQTSSGDNSKSYETSEAN. Basic and acidic residues predominate over residues 1244–1278; the sequence is YREGKNTSDKVSESNETHSEEFAEEEKPSGDKSES. Positions 1310 to 1341 are enriched in acidic residues; the sequence is SEADESVVEEEEPSGETLNTEESEMGEEEESA. A TPR 2 repeat occupies 1402–1435; that stretch reads YNLLVLSGKQSLAEGRKQEALDFFLKAIDINTGD.

The protein belongs to the SNF2/RAD54 helicase family.

The protein localises to the chromosome. It is found in the centromere. It localises to the kinetochore. The enzyme catalyses ATP + H2O = ADP + phosphate + H(+). Its function is as follows. DNA helicase that acts as a tension sensor that associates with catenated DNA which is stretched under tension until it is resolved during anaphase. Functions as ATP-dependent DNA translocase. Can promote Holliday junction branch migration (in vitro). This Danio rerio (Zebrafish) protein is DNA excision repair protein ERCC-6-like (ercc6l).